Here is a 640-residue protein sequence, read N- to C-terminus: Chaperone protein HtpG (640 aa).

Residues 1 to 343 (MQTAENIEHL…SSDLPLNVSR (343 aa)) form an a; substrate-binding region. The segment at 344–564 (EILQESKDID…THDVSGNLGR (221 aa)) is b. The c stretch occupies residues 565–640 (LLKSAGQKVP…LLLQNILSGK (76 aa)).

The protein belongs to the heat shock protein 90 family. As to quaternary structure, homodimer.

The protein resides in the cytoplasm. Functionally, molecular chaperone. Has ATPase activity. The polypeptide is Chaperone protein HtpG (Nitrosomonas europaea (strain ATCC 19718 / CIP 103999 / KCTC 2705 / NBRC 14298)).